A 575-amino-acid polypeptide reads, in one-letter code: 5-aminolevulinate synthase, mitochondrial (575 aa).

The transit peptide at 1–55 (MESITRVSMSVCPFVKSSSAQALRQLSKNSALTSQARQCPFMGAALNAKESTRSY) directs the protein to the mitochondrion. Substrate is bound by residues R124, S237, and K256. The pyridoxal 5'-phosphate site is built by S289, H317, and T361. K364 is a catalytic residue. Residue K364 is modified to N6-(pyridoxal phosphate)lysine. Residues T393 and T394 each coordinate pyridoxal 5'-phosphate. T479 contributes to the substrate binding site.

The protein belongs to the class-II pyridoxal-phosphate-dependent aminotransferase family. Homodimer. The cofactor is pyridoxal 5'-phosphate.

The protein resides in the mitochondrion matrix. The catalysed reaction is succinyl-CoA + glycine + H(+) = 5-aminolevulinate + CO2 + CoA. It functions in the pathway porphyrin-containing compound metabolism; protoporphyrin-IX biosynthesis; 5-aminolevulinate from glycine: step 1/1. Catalyzes the synthesis of 5-aminolevulinate (ALA) from succinyl-CoA and glycine, the first and rate-limiting step in heme biosynthesis. This is 5-aminolevulinate synthase, mitochondrial (HEM1) from Debaryomyces hansenii (strain ATCC 36239 / CBS 767 / BCRC 21394 / JCM 1990 / NBRC 0083 / IGC 2968) (Yeast).